Here is a 480-residue protein sequence, read N- to C-terminus: NADH-quinone oxidoreductase subunit N (480 aa).

13 helical membrane passes run 5–25, 40–60, 69–89, 110–130, 162–182, 204–224, 237–257, 266–286, 296–316, 324–344, 368–388, 404–424, and 450–470; these read NFLC…LFLY, IAIV…FTMY, ISSQ…FLVF, VIML…NFVM, YILT…FLYG, LGFV…PFHL, VTAY…IFVL, LIWN…GNLF, FFAF…IAGT, IFYT…IASV, AFVM…AGFF, ILVF…LLIV, and MVIC…YEYI.

The protein belongs to the complex I subunit 2 family. NDH-1 is composed of 14 different subunits. Subunits NuoA, H, J, K, L, M, N constitute the membrane sector of the complex.

It is found in the cell inner membrane. The catalysed reaction is a quinone + NADH + 5 H(+)(in) = a quinol + NAD(+) + 4 H(+)(out). Functionally, NDH-1 shuttles electrons from NADH, via FMN and iron-sulfur (Fe-S) centers, to quinones in the respiratory chain. The immediate electron acceptor for the enzyme in this species is believed to be a menaquinone. Couples the redox reaction to proton translocation (for every two electrons transferred, four hydrogen ions are translocated across the cytoplasmic membrane), and thus conserves the redox energy in a proton gradient. This is NADH-quinone oxidoreductase subunit N from Azobacteroides pseudotrichonymphae genomovar. CFP2.